The primary structure comprises 94 residues: PqqA binding protein (94 aa).

Belongs to the PqqD family. In terms of assembly, monomer. Interacts with PqqE.

It functions in the pathway cofactor biosynthesis; pyrroloquinoline quinone biosynthesis. In terms of biological role, functions as a PqqA binding protein and presents PqqA to PqqE, in the pyrroloquinoline quinone (PQQ) biosynthetic pathway. This chain is PqqA binding protein, found in Pseudomonas savastanoi pv. phaseolicola (strain 1448A / Race 6) (Pseudomonas syringae pv. phaseolicola (strain 1448A / Race 6)).